The sequence spans 167 residues: Ribosome maturation factor RimM (167 aa).

The PRC barrel domain occupies 94-167; sequence EENEYFIKDL…VMVVHLLEGL (74 aa).

This sequence belongs to the RimM family. Binds ribosomal protein uS19.

It localises to the cytoplasm. In terms of biological role, an accessory protein needed during the final step in the assembly of 30S ribosomal subunit, possibly for assembly of the head region. Essential for efficient processing of 16S rRNA. May be needed both before and after RbfA during the maturation of 16S rRNA. It has affinity for free ribosomal 30S subunits but not for 70S ribosomes. The sequence is that of Ribosome maturation factor RimM from Thermoanaerobacter pseudethanolicus (strain ATCC 33223 / 39E) (Clostridium thermohydrosulfuricum).